A 484-amino-acid chain; its full sequence is ATP synthase subunit beta (484 aa).

168–175 (GGAGVGKT) is a binding site for ATP.

The protein belongs to the ATPase alpha/beta chains family. As to quaternary structure, F-type ATPases have 2 components, CF(1) - the catalytic core - and CF(0) - the membrane proton channel. CF(1) has five subunits: alpha(3), beta(3), gamma(1), delta(1), epsilon(1). CF(0) has three main subunits: a(1), b(2) and c(9-12). The alpha and beta chains form an alternating ring which encloses part of the gamma chain. CF(1) is attached to CF(0) by a central stalk formed by the gamma and epsilon chains, while a peripheral stalk is formed by the delta and b chains.

The protein resides in the cell membrane. The catalysed reaction is ATP + H2O + 4 H(+)(in) = ADP + phosphate + 5 H(+)(out). Functionally, produces ATP from ADP in the presence of a proton gradient across the membrane. The catalytic sites are hosted primarily by the beta subunits. In Renibacterium salmoninarum (strain ATCC 33209 / DSM 20767 / JCM 11484 / NBRC 15589 / NCIMB 2235), this protein is ATP synthase subunit beta.